Reading from the N-terminus, the 242-residue chain is Cysteine desulfuration protein SufE (242 aa).

Cys-148 acts as the Cysteine persulfide intermediate in catalysis.

Belongs to the SufE family. As to quaternary structure, monomer. Interacts with SufS; interaction enhances cysteine desulfurase activity of SufS.

Its subcellular location is the plastid. The protein resides in the apicoplast. The protein operates within cofactor biosynthesis; iron-sulfur cluster biosynthesis. Participates in sulfur mobilization (SUF) pathway for iron-sulfur (Fe-S) cluster biogenesis. Enhances cysteine desulfurase activity of SufS. Probably functions as a sulfur acceptor for SufS. This is Cysteine desulfuration protein SufE from Plasmodium vivax.